The sequence spans 369 residues: Opsin Rh6 (369 aa).

Over 1-46 (MASLHPPSFAYMRDGRNLSLAESVPAEIMHMVDPYWYQWPPLEPMW) the chain is Extracellular. N17 carries an N-linked (GlcNAc...) asparagine glycan. A helical membrane pass occupies residues 47–71 (FGIIGFVIAILGTMSLAGNFIVMYI). The Cytoplasmic segment spans residues 72 to 83 (FTSSKGLRTPSN). A helical membrane pass occupies residues 84–109 (MFVVNLAFSDFMMMFTMFPPVVLNGF). At 110–123 (YGTWIMGPFLCELY) the chain is on the extracellular side. C120 and C197 are joined by a disulfide. Residues 124–143 (GMFGSLFGCVSIWSMTLIAY) form a helical membrane-spanning segment. Over 144-162 (DRYCVIVKGMARKPLTATA) the chain is Cytoplasmic. The helical transmembrane segment at 163 to 186 (AVLRLMVVWTICGAWALMPLFGWN) threads the bilayer. The Extracellular segment spans residues 187 to 210 (RYVPEGNMTACGTDYFAKDWWNRS). N-linked (GlcNAc...) asparagine glycans are attached at residues N193 and N208. The chain crosses the membrane as a helical span at residues 211-238 (YIIVYSLWVYLTPLLTIIFSYWHIMKAV). Topologically, residues 239 to 274 (AAHEKAMREQAKKMNVASLRNSEADKSKAIEIKLAK) are cytoplasmic. A helical membrane pass occupies residues 275–298 (VALTTISLWFFAWTPYTIINYAGI). Residues 299-305 (FESMHLS) lie on the Extracellular side of the membrane. The helical transmembrane segment at 306 to 330 (PLSTICGSVFAKANAVCNPIVYGLS) threads the bilayer. Residue K317 is modified to N6-(retinylidene)lysine. The Cytoplasmic segment spans residues 331–369 (HPKYKQVLREKMPCLACGKDDLTSDSRTQATAEISESQA).

The protein belongs to the G-protein coupled receptor 1 family. Opsin subfamily. Phosphorylated on some or all of the serine and threonine residues present in the C-terminal region. In terms of tissue distribution, each Drosophila eye is composed of 800 facets or ommatidia. Each ommatidium contains 8 photoreceptor cells (R1-R8), the R1 to R6 cells are outer cells, while R7 and R8 are inner cells. Rh6 is expressed in a subset of R8 cells, most likely expressed in the subset of R8 cells paired with Rh4-expressing R7 cells (R7y).

It localises to the membrane. In terms of biological role, visual pigments are the light-absorbing molecules that mediate vision. They consist of an apoprotein, opsin, covalently linked to cis-retinal. This is Opsin Rh6 (Rh6) from Drosophila melanogaster (Fruit fly).